Consider the following 627-residue polypeptide: Zinc finger MYM-type protein 5 (627 aa).

A disordered region spans residues 1–23; that stretch reads MEAHLADMESSGGPTSSLAGTSR. A compositionally biased stretch (polar residues) spans 12–23; the sequence is GGPTSSLAGTSR. A Glycyl lysine isopeptide (Lys-Gly) (interchain with G-Cter in SUMO2) cross-link involves residue K59. Positions 91–123 are disordered; sequence DDEGDTDTNGGEEKNPTDFIEWGPNGNKSSTKN. Glycyl lysine isopeptide (Lys-Gly) (interchain with G-Cter in SUMO2) cross-links involve residues K137 and K195. An MYM-type 1 zinc finger spans residues 234–268; it reads HLFCSTTCLSSFSHKRTRKTRNVMCKKDSPVRTTT. The MYM-type 2; degenerate zinc finger occupies 280–319; sequence QGFYNASLSPYENCQSLRKEVFTKSRCIICNKLGEVRHEI. MYM-type zinc fingers lie at residues 326 to 354 and 370 to 396; these read HKLCSNNCFNEYRLTNGLIMNCCEQCSKY and KRFCCQNCADEYKEIMEAKSKLLLLQN. A disordered region spans residues 405 to 429; the sequence is ENEKRLRESSGTLSGNTGDIPEKKE. Residues K408, K427, and K517 each participate in a glycyl lysine isopeptide (Lys-Gly) (interchain with G-Cter in SUMO2) cross-link.

In terms of assembly, interacts (via N-terminal 120 amino acid region) with ETV5 (via C-terminal).

The protein resides in the nucleus. Functionally, functions as a transcriptional regulator. This chain is Zinc finger MYM-type protein 5 (Zmym5), found in Mus musculus (Mouse).